Reading from the N-terminus, the 180-residue chain is MASAVVNQSEAAAVRAPSKPVKTYSKENEQLVKQSWEILKKDAQRNGINFFRKVFEIAPGAKAMYSFLRDSTIPFEENPKVKNHARYVFMMTGDAAVQLGEKGAYQVLESKLQKLAATHVNAGVTDDQFEIVKEAILYAIEMGVPDLWSPELKSAWGDAYDMLAEQVKAEMHAQRSAATS.

Positions 23 to 172 (TYSKENEQLV…LAEQVKAEMH (150 aa)) constitute a Globin domain. Residues 56-60 (EIAPG) carry the Homodimerization motif. 6 residues coordinate heme b: Ser66, Lys80, His84, Lys114, Thr118, and His119. Positions 126-138 (DDQFEIVKEAILY) match the Homodimerization motif.

Belongs to the plant globin family. Homodimer. The cofactor is heme b.

Its subcellular location is the cytoplasm. The protein resides in the nucleus. It carries out the reaction Fe(III)-heme b-[protein] + nitric oxide + H2O = Fe(II)-heme b-[protein] + nitrite + 2 H(+). Phytoglobin that reduces nitrite to nitric oxide (NO) under anoxic conditions (e.g. during flooding or in waterlogged soil). May not function as an oxygen storage or transport protein. Has an unusually high affinity for O(2) through an hexacoordinate heme iron because of a very low dissociation constant. This Physcomitrium patens (Spreading-leaved earth moss) protein is Anaerobic nitrite reductase GLB0.